A 188-amino-acid chain; its full sequence is MTRPISFVTGNAKKLEEVRAILGPKFPRELLPVKLDLPELQGEIDDICRKKCLEAARRVKGPVLVEDTCLCFNALKGLPGPYIKWFLEKLEPEGLHKLLDGWEDKSAEAVCTFAYAPGEDAEVILFQGRTQGDIVYPRGCRDFGWDPIFQPKGYDKSYAELPKEKKNEISHRFRALNKLRDYFVAENQ.

9 to 14 (TGNAKK) contacts ITP. Glutamate 39 lines the Mg(2+) pocket. Residues lysine 51, 67–68 (DT), lysine 84, 143–146 (FGWD), lysine 166, and 171–172 (HR) contribute to the ITP site.

It belongs to the HAM1 NTPase family. Homodimer. Mg(2+) is required as a cofactor. It depends on Mn(2+) as a cofactor.

The protein resides in the cytoplasm. The catalysed reaction is ITP + H2O = IMP + diphosphate + H(+). It catalyses the reaction dITP + H2O = dIMP + diphosphate + H(+). It carries out the reaction XTP + H2O = XMP + diphosphate + H(+). Its function is as follows. Pyrophosphatase that hydrolyzes non-canonical purine nucleotides such as inosine triphosphate (ITP), deoxyinosine triphosphate (dITP) or xanthosine 5'-triphosphate (XTP) to their respective monophosphate derivatives. The enzyme does not distinguish between the deoxy- and ribose forms. Probably excludes non-canonical purines from RNA and DNA precursor pools, thus preventing their incorporation into RNA and DNA and avoiding chromosomal lesions. The sequence is that of Inosine triphosphate pyrophosphatase from Aedes aegypti (Yellowfever mosquito).